The chain runs to 163 residues: Nucleotide-binding protein LA_3406 (163 aa).

Belongs to the YajQ family.

Nucleotide-binding protein. This chain is Nucleotide-binding protein LA_3406, found in Leptospira interrogans serogroup Icterohaemorrhagiae serovar Lai (strain 56601).